The primary structure comprises 489 residues: Glycogen synthase (489 aa).

Residue lysine 15 coordinates ADP-alpha-D-glucose.

It belongs to the glycosyltransferase 1 family. Bacterial/plant glycogen synthase subfamily.

It carries out the reaction [(1-&gt;4)-alpha-D-glucosyl](n) + ADP-alpha-D-glucose = [(1-&gt;4)-alpha-D-glucosyl](n+1) + ADP + H(+). The protein operates within glycan biosynthesis; glycogen biosynthesis. Its function is as follows. Synthesizes alpha-1,4-glucan chains using ADP-glucose. This Francisella tularensis subsp. tularensis (strain SCHU S4 / Schu 4) protein is Glycogen synthase.